A 148-amino-acid chain; its full sequence is Endoribonuclease YbeY (148 aa).

Residues histidine 113, histidine 117, and histidine 123 each coordinate Zn(2+).

The protein belongs to the endoribonuclease YbeY family. Zn(2+) serves as cofactor.

Its subcellular location is the cytoplasm. Single strand-specific metallo-endoribonuclease involved in late-stage 70S ribosome quality control and in maturation of the 3' terminus of the 16S rRNA. This is Endoribonuclease YbeY from Borrelia recurrentis (strain A1).